Consider the following 109-residue polypeptide: ATPase inhibitor, mitochondrial (109 aa).

A mitochondrion-targeting transit peptide spans 1-25; that stretch reads MAATALAARTRQAVWSVWAMQGRGF. The segment at 26 to 52 is disordered; it reads GSESGDNVRSSAGAVRDAGGAFGKREQ. The tract at residues 26-52 is N-terminal inhibitory region; the sequence is GSESGDNVRSSAGAVRDAGGAFGKREQ. Positions 69–109 form a coiled coil; sequence ALKKHHENEISHHAKEIERLQKEIERHKQSIKKLKQSEDDD. Residues 74–106 are antiparallel alpha-helical coiled coil region; sequence HENEISHHAKEIERLQKEIERHKQSIKKLKQSE. N6-succinyllysine is present on Lys103.

It belongs to the ATPase inhibitor family. As to quaternary structure, homodimer; represents the active form and is present at a pH value below 6.5. Homotetramer; represents the inactive form and is present at a pH value above 7.0.

It localises to the mitochondrion. Functionally, endogenous F(1)F(o)-ATPase inhibitor limiting ATP depletion when the mitochondrial membrane potential falls below a threshold and the F(1)F(o)-ATP synthase starts hydrolyzing ATP to pump protons out of the mitochondrial matrix. Required to avoid the consumption of cellular ATP when the F(1)F(o)-ATP synthase enzyme acts as an ATP hydrolase. Indirectly acts as a regulator of heme synthesis in erythroid tissues: regulates heme synthesis by modulating the mitochondrial pH and redox potential, allowing FECH to efficiently catalyze the incorporation of iron into protoporphyrin IX to produce heme. This Bos taurus (Bovine) protein is ATPase inhibitor, mitochondrial.